The sequence spans 354 residues: Biotin synthase (354 aa).

A Radical SAM core domain is found at 41 to 265 (NEVQISRLLS…IMPHSRVRLS (225 aa)). C56, C60, and C63 together coordinate [4Fe-4S] cluster. Residues C100, C131, C191, and R263 each contribute to the [2Fe-2S] cluster site.

The protein belongs to the radical SAM superfamily. Biotin synthase family. Homodimer. Requires [4Fe-4S] cluster as cofactor. The cofactor is [2Fe-2S] cluster.

It carries out the reaction (4R,5S)-dethiobiotin + (sulfur carrier)-SH + 2 reduced [2Fe-2S]-[ferredoxin] + 2 S-adenosyl-L-methionine = (sulfur carrier)-H + biotin + 2 5'-deoxyadenosine + 2 L-methionine + 2 oxidized [2Fe-2S]-[ferredoxin]. The protein operates within cofactor biosynthesis; biotin biosynthesis; biotin from 7,8-diaminononanoate: step 2/2. Catalyzes the conversion of dethiobiotin (DTB) to biotin by the insertion of a sulfur atom into dethiobiotin via a radical-based mechanism. This Shewanella sediminis (strain HAW-EB3) protein is Biotin synthase.